We begin with the raw amino-acid sequence, 644 residues long: MTEEKASVRTYDPPEEFASRANVRDPGVYEEAARDYEGFWAERARKLHWFREWDEVLRWDPPEAQWFVGGKINASYNCLDYQVQQGRGDKRAIIWEGDEPGENRTLTYSELKAEVEKFANVLKGLGVRKGDAVSIYLPMIPELPIAMLACARIGAPHSVVFGAFSAQSLRDRINDCEAKVLVTADSGPRGGKRTPLKANADEALEDTPSIEKVVVVRRTGDEVNMVEGRDLWWHELMREAEPECPAEEMDSEDILYILYSSGSTGKPKGIVHTTGGYLTHVNTTTDWVFDLKEDDVYWCTADIGWVTGHSYIVYGPLSNGATALMFEGTPSYPANDRWWDIIERHGVTILYTAPTAIRAFMKQGPGPIEKHDLSSLRLLGSVGEPINPRAWEWYHEHVGGGRCPVVDTWWQTETGGIMISPLPGITRTKPGSATFPLPGIFAGIYDEEGNEIEGPGVGNLVIKRPWPGMLRTLYKDPERFRETYWQKYGDVYFSGDGARRDEDGYFWVTGRVDDVINVSGHRISTAEVESALVAHPAVAEAAVIGRYDEDTGQAIVAYVILEGGREGNDELAQELRQQVRKVIGAHARPQEIIFTPDLPKTRSGKIMRRILRSLSEGRDDLGDTTTLADPGVVESLKEQVAASR.

CoA contacts are provided by residues 189–192 (RGGK) and Thr-307. Residues 383–385 (GEP), 407–412 (DTWWQT), Asp-496, and Arg-511 contribute to the ATP site. A CoA-binding site is contributed by Ser-519. Residue Arg-522 coordinates ATP. Mg(2+) contacts are provided by Val-533, His-535, and Val-538. A CoA-binding site is contributed by Arg-580. Residue Lys-605 is modified to N6-acetyllysine.

It belongs to the ATP-dependent AMP-binding enzyme family. It depends on Mg(2+) as a cofactor. Post-translationally, acetylated. Deacetylation by the SIR2-homolog deacetylase activates the enzyme.

It carries out the reaction acetate + ATP + CoA = acetyl-CoA + AMP + diphosphate. Its function is as follows. Catalyzes the conversion of acetate into acetyl-CoA (AcCoA), an essential intermediate at the junction of anabolic and catabolic pathways. AcsA undergoes a two-step reaction. In the first half reaction, AcsA combines acetate with ATP to form acetyl-adenylate (AcAMP) intermediate. In the second half reaction, it can then transfer the acetyl group from AcAMP to the sulfhydryl group of CoA, forming the product AcCoA. The polypeptide is Acetyl-coenzyme A synthetase (Rubrobacter xylanophilus (strain DSM 9941 / JCM 11954 / NBRC 16129 / PRD-1)).